Consider the following 1732-residue polypeptide: Lys-gingipain W83 (1732 aa).

Positions 1–24 are cleaved as a signal peptide; the sequence is MRKLLLLIAASLLGVGLYAQSAKI. Positions 25–228 are excised as a propeptide; that stretch reads KLDAPTTRTT…ETAYKQLFNR (204 aa). Residues Asp313, Asp337, Asp339, Phe341, and Glu343 each contribute to the Ca(2+) site. His444 serves as the catalytic Proton donor. Cys477 (nucleophile) is an active-site residue. Ca(2+)-binding residues include Phe482 and Glu491. The disordered stretch occupies residues 965–988; sequence DAPNGTPNPNPNPNPNPGTTLSES. Over residues 970–980 the composition is skewed to pro residues; that stretch reads TPNPNPNPNPN. Residues Ser988, Glu990, Asp1001, Asp1003, Asp1005, His1007, Ser1022, Gly1024, Asn1043, Asp1146, Glu1147, Asp1433, Glu1435, Asp1446, Asp1448, Asp1450, Asn1452, Ser1470, Ile1472, Asn1490, and Asp1595 each coordinate Ca(2+).

This sequence belongs to the peptidase C25 family. Proteolytically cleaved into a catalytic subunit and three adhesins. Arg-gingipain is involved in this post-translational processing.

Its subcellular location is the secreted. It catalyses the reaction Endopeptidase with strict specificity for lysyl bonds.. Its function is as follows. Cysteine proteinase with a strong preference for substrates with Lys in the P1 position. Hydrolyzes bovine hemoglobin, bovine serum albumin, casein, human placental type I collagen and human IgA and IgG. Disrupts the functions of polymorphonuclear leukocytes. May act as a virulence factor in the development of peridontal disease. Involved in the coaggregation of P.gingivalis with other oral bacteria. Has hemolytic activity; this is mediated by the adhesin domains and does not require the catalytic domain. The chain is Lys-gingipain W83 from Porphyromonas gingivalis (Bacteroides gingivalis).